We begin with the raw amino-acid sequence, 359 residues long: tRNA-specific 2-thiouridylase MnmA (359 aa).

ATP-binding positions include 7 to 14 (AMSGGVDS) and methionine 33. Cysteine 101 acts as the Nucleophile in catalysis. Residues cysteine 101 and cysteine 198 are joined by a disulfide bond. Glycine 125 is a binding site for ATP. The interaction with tRNA stretch occupies residues 148–150 (KDQ). The active-site Cysteine persulfide intermediate is cysteine 198.

Belongs to the MnmA/TRMU family.

The protein localises to the cytoplasm. The enzyme catalyses S-sulfanyl-L-cysteinyl-[protein] + uridine(34) in tRNA + AH2 + ATP = 2-thiouridine(34) in tRNA + L-cysteinyl-[protein] + A + AMP + diphosphate + H(+). In terms of biological role, catalyzes the 2-thiolation of uridine at the wobble position (U34) of tRNA, leading to the formation of s(2)U34. This is tRNA-specific 2-thiouridylase MnmA from Chloroflexus aggregans (strain MD-66 / DSM 9485).